Reading from the N-terminus, the 293-residue chain is RNA-binding Raly-like protein (293 aa).

Residues 21–92 (SRVFIGNLNT…QPLDINMAGE (72 aa)) form the RRM domain. Disordered stretches follow at residues 159 to 195 (PRAAVTTTRRGKGVFSMKGGSRSAVSGSSSSGSKLKS) and 245 to 293 (QDEC…LQIK). The span at 176–192 (KGGSRSAVSGSSSSGSK) shows a compositional bias: low complexity. The stretch at 192 to 254 (KLKSDELQTI…QDECVSENAD (63 aa)) forms a coiled coil. Positions 259–284 (EPAEGAPDADGEELTDGVEEDFDEDG) are enriched in acidic residues.

The protein belongs to the RRM HNRPC family. RALY subfamily.

The chain is RNA-binding Raly-like protein (RALYL) from Bos taurus (Bovine).